The primary structure comprises 130 residues: Small ribosomal subunit protein uS11c (130 aa).

The protein belongs to the universal ribosomal protein uS11 family. As to quaternary structure, part of the 30S ribosomal subunit.

Its subcellular location is the plastid. It localises to the chloroplast. The sequence is that of Small ribosomal subunit protein uS11c from Anthoceros angustus (Hornwort).